The following is a 673-amino-acid chain: Sodium/myo-inositol cotransporter 2 (673 aa).

The Extracellular segment spans residues 1–27 (MESTTSSPQPPPSDALEAFPQKSMEPA). Residues 28–48 (DIVVLVLYFLFVLAVGLWSTV) traverse the membrane as a helical segment. Residues 49 to 56 (RTKRDTVK) lie on the Cytoplasmic side of the membrane. Residues 57 to 77 (GYFLAGGDMVWWPVGASLFAS) form a helical membrane-spanning segment. N78 is a topological domain (extracellular). A helical transmembrane segment spans residues 79 to 99 (VGSGHFIGLAGSGAAVGISVA). Topologically, residues 100 to 102 (AYE) are cytoplasmic. The helical transmembrane segment at 103 to 123 (LNGLFSVLMLAWIFLPIYIAG) threads the bilayer. The Extracellular portion of the chain corresponds to 124–180 (QVTTMPEYLKRRFGGSRIPITLASIYPSTHSLTILQVDMYAGAIFIQQSLHLDLYLA). Residues 181-201 (IVGLLAVTALYTVAGGLAAVI) traverse the membrane as a helical segment. Topologically, residues 202–208 (YTDALQT) are cytoplasmic. A helical transmembrane segment spans residues 209–229 (VIMLIGAFILMGYSFAAVGGM). The Extracellular segment spans residues 230-272 (EGLKDQYFLALASNRSENSSCGLPREDAFHIFRDPLTSDLPWP). The helical transmembrane segment at 273 to 293 (GILFGMSIPSLWYWCTDQVIV) threads the bilayer. At 294 to 308 (QRSLAAKNLSHAKGG) the chain is on the cytoplasmic side. A helical transmembrane segment spans residues 309-329 (SLMAAYLKVLPLFLMVFPGMV). At 330–375 (SRILFPDQVACAHPDICQRVCSNPSGCSDIAYPKLVLELLPTGLRG) the chain is on the extracellular side. Residues 376-396 (LMMAVMVAALMSSLTSIFNSA) form a helical membrane-spanning segment. Residues 397–418 (STIFTMDLWHHIRPRASERELM) lie on the Cytoplasmic side of the membrane. A helical transmembrane segment spans residues 419–439 (IVGRVFVLALVLVSILWIPVV). Residues 440-446 (QASQGGQ) lie on the Extracellular side of the membrane. A helical membrane pass occupies residues 447–467 (LFIYIQSISSYLQPPVAVVFI). Residues 468-479 (MGCFWKRTNEKG) lie on the Cytoplasmic side of the membrane. A helical membrane pass occupies residues 480–500 (AFSGLILGLLLGLVRLILDFV). Residues 501 to 521 (YVQPRCDQPDDRPAVVKDVHY) are Extracellular-facing. A helical transmembrane segment spans residues 522 to 542 (LYFSMILSSTTLITVFTVSWF). The Cytoplasmic portion of the chain corresponds to 543-652 (TETPSKEMVS…SLEENPLVKT (110 aa)). Residues 653–673 (LLDVNCIVCISCAIFLWGYFA) traverse the membrane as a helical segment.

This sequence belongs to the sodium:solute symporter (SSF) (TC 2.A.21) family. In terms of tissue distribution, expressed in kidney and small intestine.

The protein localises to the membrane. It is found in the apical cell membrane. The enzyme catalyses myo-inositol(out) + 2 Na(+)(out) = myo-inositol(in) + 2 Na(+)(in). It carries out the reaction 1D-chiro-inositol(out) + 2 Na(+)(out) = 1D-chiro-inositol(in) + 2 Na(+)(in). The catalysed reaction is D-glucose(out) + 2 Na(+)(out) = D-glucose(in) + 2 Na(+)(in). It catalyses the reaction D-xylose(out) + 2 Na(+)(out) = D-xylose(in) + 2 Na(+)(in). With respect to regulation, MI transport activity inhibited by D-chiro-inositol (DCI), phlorizin (Pz) and sodium (Na(+)). Insulin increases D-chiro-inositol uptake. Its function is as follows. Involved in the sodium-dependent cotransport of myo-inositol (MI) with a Na(+):MI stoichiometry of 2:1. Exclusively responsible for apical MI transport and absorption in intestine. Can also transport D-chiro-inositol (DCI) but not L-fucose. Exhibits stereospecific cotransport of both D-glucose and D-xylose. May induce apoptosis through the TNF-alpha, PDCD1 pathway. May play a role in the regulation of MI concentration in serum, involving reabsorption in at least the proximal tubule of the kidney. In Rattus norvegicus (Rat), this protein is Sodium/myo-inositol cotransporter 2.